The primary structure comprises 181 residues: Inner membrane-spanning protein YciB (181 aa).

Helical transmembrane passes span 10-30, 50-70, 72-92, 118-138, and 148-168; these read LVIF…GALI, MHLI…VFHD, AFIK…LGIS, ITWY…YVAF, and FKVF…VFYL.

Belongs to the YciB family.

The protein localises to the cell inner membrane. In terms of biological role, plays a role in cell envelope biogenesis, maintenance of cell envelope integrity and membrane homeostasis. In Shewanella putrefaciens (strain CN-32 / ATCC BAA-453), this protein is Inner membrane-spanning protein YciB.